A 181-amino-acid chain; its full sequence is dTTP/UTP pyrophosphatase (181 aa).

Aspartate 67 acts as the Proton acceptor in catalysis.

Belongs to the Maf family. YhdE subfamily. A divalent metal cation serves as cofactor.

The protein localises to the cytoplasm. It catalyses the reaction dTTP + H2O = dTMP + diphosphate + H(+). The enzyme catalyses UTP + H2O = UMP + diphosphate + H(+). Nucleoside triphosphate pyrophosphatase that hydrolyzes dTTP and UTP. May have a dual role in cell division arrest and in preventing the incorporation of modified nucleotides into cellular nucleic acids. The polypeptide is dTTP/UTP pyrophosphatase (Latilactobacillus sakei subsp. sakei (strain 23K) (Lactobacillus sakei subsp. sakei)).